The primary structure comprises 142 residues: Small ribosomal subunit protein uS12 (142 aa).

The disordered stretch occupies residues M1 to Q44. Basic residues predominate over residues A7–H18. A compositionally biased stretch (basic and acidic residues) spans R19 to P38.

Belongs to the universal ribosomal protein uS12 family. As to quaternary structure, part of the 30S ribosomal subunit.

With S4 and S5 plays an important role in translational accuracy. Located at the interface of the 30S and 50S subunits. This chain is Small ribosomal subunit protein uS12, found in Haloarcula marismortui (strain ATCC 43049 / DSM 3752 / JCM 8966 / VKM B-1809) (Halobacterium marismortui).